The following is a 309-amino-acid chain: uncharacterized protein (309 aa).

2 disordered regions span residues 1 to 94 (IGEV…RQQI) and 286 to 309 (HTRNSKFHPPAKNTPPPLEDPPRG). The span at 30-43 (PAQPPSPAPTPSRT) shows a compositional bias: pro residues. Residues 58 to 67 (RSKTPDKRSA) show a composition bias toward basic and acidic residues. A compositionally biased stretch (pro residues) spans 297–309 (KNTPPPLEDPPRG).

This is an uncharacterized protein from Homo sapiens (Human).